The primary structure comprises 219 residues: Putative NAD(P)H nitroreductase SSP0379 (219 aa).

Belongs to the nitroreductase family. FMN is required as a cofactor.

The sequence is that of Putative NAD(P)H nitroreductase SSP0379 from Staphylococcus saprophyticus subsp. saprophyticus (strain ATCC 15305 / DSM 20229 / NCIMB 8711 / NCTC 7292 / S-41).